The sequence spans 239 residues: Ribosomal RNA small subunit methyltransferase G (239 aa).

S-adenosyl-L-methionine-binding positions include G79, F84, 130 to 131 (AE), and R149.

Belongs to the methyltransferase superfamily. RNA methyltransferase RsmG family.

The protein localises to the cytoplasm. Functionally, specifically methylates the N7 position of a guanine in 16S rRNA. In Lactobacillus delbrueckii subsp. bulgaricus (strain ATCC 11842 / DSM 20081 / BCRC 10696 / JCM 1002 / NBRC 13953 / NCIMB 11778 / NCTC 12712 / WDCM 00102 / Lb 14), this protein is Ribosomal RNA small subunit methyltransferase G.